Here is a 557-residue protein sequence, read N- to C-terminus: MDNLRPVLYLSMLLVLFLIWQAWNRDYGPQPVAAPGAQEQVMDRDGVPAPPQDVPDAPVSEAVDAPTEVAPAEPDRRRIRVVTDVLDIEIDTRGGDLVRADLPTYPVSLRTPDQPIRLLDERFRQYVAQSGLIHDRVPGVSGEGRAPSHHAIFQAERDEFRLADGQDELRVPLTWTSEDGVQVTKTYTFRRGDFLINVDHAVRNNSDQPWVGRQYRQIRHGSTPSRESWFLYTFTGVAYHDGRYEKLSLEDMAGKPLDKDVQGGWISIIQHYFLTAWVPFEHEINQFYTRVLGTPARPEHIIGMRSEAQTAAPGEETVFTSRFWVGPKEQAALKAIQPGLELTVDYGMLSFLAKPLFWVLDWIHNVVGNWGWAIIILTILIKLVFYKLSETSYRSMAKMRAVQPKMMQLKDRYGDDKQRMNQALMELYKKEKINPLGGCLPILVQIPVFIALYWVLLESVEMRQAPWILWIQDLSVRDPYFILPILMGVTMIAQYKLNPAPMDPIQQKLMMALPFVFTVFFAFFPAGLVLYWFVNNLLSIAQQWYITRNIEKAGKKG.

The chain crosses the membrane as a helical span at residues 3 to 23; it reads NLRPVLYLSMLLVLFLIWQAW. Residues 34–60 form a disordered region; that stretch reads APGAQEQVMDRDGVPAPPQDVPDAPVS. A run of 4 helical transmembrane segments spans residues 366–386, 436–456, 480–500, and 514–534; these read VVGN…LVFY, LGGC…YWVL, YFIL…LNPA, and PFVF…YWFV.

It belongs to the OXA1/ALB3/YidC family. Type 1 subfamily. Interacts with the Sec translocase complex via SecD. Specifically interacts with transmembrane segments of nascent integral membrane proteins during membrane integration.

Its subcellular location is the cell inner membrane. Functionally, required for the insertion and/or proper folding and/or complex formation of integral membrane proteins into the membrane. Involved in integration of membrane proteins that insert both dependently and independently of the Sec translocase complex, as well as at least some lipoproteins. Aids folding of multispanning membrane proteins. The polypeptide is Membrane protein insertase YidC (Thioalkalivibrio sulfidiphilus (strain HL-EbGR7)).